Consider the following 122-residue polypeptide: Large ribosomal subunit protein uL18 (122 aa).

Belongs to the universal ribosomal protein uL18 family. As to quaternary structure, part of the 50S ribosomal subunit; part of the 5S rRNA/L5/L18/L25 subcomplex. Contacts the 5S and 23S rRNAs.

Functionally, this is one of the proteins that bind and probably mediate the attachment of the 5S RNA into the large ribosomal subunit, where it forms part of the central protuberance. This is Large ribosomal subunit protein uL18 from Acetivibrio thermocellus (strain ATCC 27405 / DSM 1237 / JCM 9322 / NBRC 103400 / NCIMB 10682 / NRRL B-4536 / VPI 7372) (Clostridium thermocellum).